A 325-amino-acid polypeptide reads, in one-letter code: Phospholipid phosphatase-related protein type 1 (325 aa).

A glycan (N-linked (GlcNAc...) asparagine) is linked at asparagine 5. 3 consecutive transmembrane segments (helical) span residues isoleucine 13–tyrosine 33, phenylalanine 67–isoleucine 87, and phenylalanine 127–valine 147. N-linked (GlcNAc...) asparagine glycosylation occurs at asparagine 163. A run of 3 helical transmembrane segments spans residues alanine 201–isoleucine 219, leucine 226–leucine 244, and valine 257–histidine 277. A Phosphoserine modification is found at serine 307. A glycan (N-linked (GlcNAc...) asparagine) is linked at asparagine 316.

The protein belongs to the PA-phosphatase related phosphoesterase family. Highly expressed in the brain. Also found in the liver, kidney and testis. In the brain shows a strongest expression in the hippocampus and cerebellum.

The protein resides in the cell membrane. The protein localises to the cell projection. Its subcellular location is the neuron projection. May play a role in neurite outgrowth and neurogenesis. This chain is Phospholipid phosphatase-related protein type 1, found in Rattus norvegicus (Rat).